The primary structure comprises 1045 residues: FERM, ARHGEF and pleckstrin domain-containing protein 1 (1045 aa).

The tract at residues 1–37 (MGEIEQRPTPGSRLGAPENSGISTLERGQKPPPTPSG) is disordered. 2 positions are modified to phosphoserine: serine 20 and serine 23. Threonine 24 carries the post-translational modification Phosphothreonine. The region spanning 40–320 (VSIKIQMLDD…EHHAFFRLFE (281 aa)) is the FERM domain. Phosphoserine occurs at positions 340, 373, 389, 403, 418, 427, and 433. Residues 392-534 (SASLTFGEGA…TDDEDEGRRK (143 aa)) are disordered. Polar residues-rich tracts occupy residues 471–489 (TGSL…NSQG) and 496–511 (VTLS…QASP). Serine 510 and serine 514 each carry phosphoserine. In terms of domain architecture, DH spans 540 to 730 (KAYFIAKEVS…TEMVAQLHGT (191 aa)). In terms of domain architecture, PH 1 spans 759–856 (EFIRLGSLSK…WVEDIQMAID (98 aa)). Residues serine 833, serine 872, and serine 878 each carry the phosphoserine modification. The tract at residues 866-902 (PEFLASSPPDNKSPDEATAADQESEDDLSASRTSLER) is disordered. Threonine 883 is modified (phosphothreonine). Phosphoserine occurs at positions 889, 896, and 899. Positions 932–1029 (ENQLSGNLLR…WMEVIRSATS (98 aa)) constitute a PH 2 domain.

Interacts with CADM1. Interacts with RAC1.

Its subcellular location is the cell membrane. It localises to the synapse. The protein localises to the synaptosome. The protein resides in the cytoplasm. It is found in the cytosol. Its subcellular location is the cell projection. It localises to the filopodium. The protein localises to the dendrite. The protein resides in the dendritic spine. Functionally, functions as a guanine nucleotide exchange factor for RAC1. May play a role in semaphorin signaling. Plays a role in the assembly and disassembly of dendritic filopodia, the formation of dendritic spines, regulation of dendrite length and ultimately the formation of synapses. The sequence is that of FERM, ARHGEF and pleckstrin domain-containing protein 1 (FARP1) from Pongo abelii (Sumatran orangutan).